The sequence spans 167 residues: L-alanine exporter AlaE (167 aa).

The next 4 helical transmembrane spans lie at 25-45 (GTEF…TGII), 50-70 (IAGM…ALMI), 105-125 (FQVP…GGLV), and 129-149 (LGAA…LNWV).

This sequence belongs to the AlaE exporter family.

Its subcellular location is the cell inner membrane. Functionally, exports L-alanine. The protein is L-alanine exporter AlaE of Pantoea sp. (strain At-9b).